Consider the following 379-residue polypeptide: Homoserine O-succinyltransferase (379 aa).

In terms of domain architecture, AB hydrolase-1 spans 51 to 360 (NAVLICHALS…DAPQGHDAFL (310 aa)). The active-site Nucleophile is Ser-157. Position 227 (Arg-227) interacts with substrate. Residues Asp-323 and His-356 contribute to the active site. Asp-357 serves as a coordination point for substrate.

The protein belongs to the AB hydrolase superfamily. MetX family. Homodimer.

The protein resides in the cytoplasm. It carries out the reaction L-homoserine + succinyl-CoA = O-succinyl-L-homoserine + CoA. The protein operates within amino-acid biosynthesis; L-methionine biosynthesis via de novo pathway; O-succinyl-L-homoserine from L-homoserine: step 1/1. Its function is as follows. Transfers a succinyl group from succinyl-CoA to L-homoserine, forming succinyl-L-homoserine. The sequence is that of Homoserine O-succinyltransferase from Pseudomonas syringae pv. tomato (strain ATCC BAA-871 / DC3000).